We begin with the raw amino-acid sequence, 912 residues long: Rho guanine nucleotide exchange factor 1 (912 aa).

The region spanning 41 to 232 (EQNSQFQSLE…GLYMRHLGVR (192 aa)) is the RGSL domain. Residues 248–413 (KVMGNRRSDE…PDTLHSLPKS (166 aa)) are disordered. Residues 283 to 313 (DFRHLKAEVDAEKPGATDRKGGVGMPSRDRN) are compositionally biased toward basic and acidic residues. Acidic residues predominate over residues 365-381 (STDEGAETESPEPGDEG). Residues serine 374 and serine 409 each carry the phosphoserine modification. The 190-residue stretch at 416-605 (KRQEVISELL…REILHHVNQA (190 aa)) folds into the DH domain. One can recognise a PH domain in the interval 647 to 760 (KLVHEGPLTW…WCALITETAG (114 aa)). At threonine 695 the chain carries Phosphothreonine. Residue tyrosine 738 is modified to Phosphotyrosine; by JAK2. Disordered regions lie at residues 763 to 802 (KVPA…PADA) and 841 to 865 (AEED…LSPA). Residues 777-789 (PSSTREPLLSSSE) are compositionally biased toward low complexity. A Phosphoserine modification is found at serine 863. A coiled-coil region spans residues 865–896 (ARTQEIQENLLSLEETMKQLEELEEEFCRLRP).

As to quaternary structure, interacts with RHOA, GNA12 and GNA13. Homooligomerizes through the coiled coil region. May interact with CCPG1. Interacts with CTNNAL1. Post-translationally, phosphorylated by PKCA. Angiotensin-2 induced Tyr-738 phosphorylation is mediated by JAK2. In terms of tissue distribution, ubiquitously expressed.

It is found in the cytoplasm. The protein localises to the membrane. In terms of biological role, seems to play a role in the regulation of RhoA GTPase by guanine nucleotide-binding alpha-12 (GNA12) and alpha-13 (GNA13) subunits. Acts as a GTPase-activating protein (GAP) for GNA12 and GNA13, and as guanine nucleotide exchange factor (GEF) for RhoA GTPase. Activated G alpha 13/GNA13 stimulates the RhoGEF activity through interaction with the RGS-like domain. This GEF activity is inhibited by binding to activated GNA12. Mediates angiotensin-2-induced RhoA activation. In lymphoid follicles, may trigger activation of GNA13 as part of S1PR2-dependent signaling pathway that leads to inhibition of germinal center (GC) B cell growth and migration outside the GC niche. The polypeptide is Rho guanine nucleotide exchange factor 1 (ARHGEF1) (Homo sapiens (Human)).